The following is a 351-amino-acid chain: Histidinol-phosphate aminotransferase (351 aa).

The residue at position 221 (Lys-221) is an N6-(pyridoxal phosphate)lysine.

Belongs to the class-II pyridoxal-phosphate-dependent aminotransferase family. Histidinol-phosphate aminotransferase subfamily. In terms of assembly, homodimer. Requires pyridoxal 5'-phosphate as cofactor.

The catalysed reaction is L-histidinol phosphate + 2-oxoglutarate = 3-(imidazol-4-yl)-2-oxopropyl phosphate + L-glutamate. It functions in the pathway amino-acid biosynthesis; L-histidine biosynthesis; L-histidine from 5-phospho-alpha-D-ribose 1-diphosphate: step 7/9. In Staphylococcus epidermidis (strain ATCC 35984 / DSM 28319 / BCRC 17069 / CCUG 31568 / BM 3577 / RP62A), this protein is Histidinol-phosphate aminotransferase.